We begin with the raw amino-acid sequence, 279 residues long: Energy-coupling factor transporter ATP-binding protein EcfA1 (279 aa).

The ABC transporter domain occupies 6-240 (VRLEHVFYKY…ADAMREIGLG (235 aa)). An ATP-binding site is contributed by 40-47 (GHNGSGKS).

Belongs to the ABC transporter superfamily. Energy-coupling factor EcfA family. In terms of assembly, forms a stable energy-coupling factor (ECF) transporter complex composed of 2 membrane-embedded substrate-binding proteins (S component), 2 ATP-binding proteins (A component) and 2 transmembrane proteins (T component).

It localises to the cell membrane. In terms of biological role, ATP-binding (A) component of a common energy-coupling factor (ECF) ABC-transporter complex. Unlike classic ABC transporters this ECF transporter provides the energy necessary to transport a number of different substrates. The polypeptide is Energy-coupling factor transporter ATP-binding protein EcfA1 (Listeria monocytogenes serotype 4b (strain F2365)).